A 208-amino-acid polypeptide reads, in one-letter code: Germin-like protein subfamily 3 member 1 (208 aa).

A signal peptide spans 1–18; sequence MLRTIFLLSLLFALSNAS. Cys23 and Cys38 are disulfide-bonded. The 147-residue stretch at 52-198 folds into the Cupin type-1 domain; that stretch reads SGLGTPGNTT…TTFLDATTVK (147 aa). The N-linked (GlcNAc...) asparagine glycan is linked to Asn59. Mn(2+) contacts are provided by His100, His102, Glu107, and His146.

It belongs to the germin family. As to quaternary structure, may not form oligomer. In terms of tissue distribution, expressed during germination, and also in green shoots, etiolated seedlings and whole seedlings.

Its subcellular location is the secreted. The protein localises to the extracellular space. It localises to the apoplast. In terms of biological role, may play a role in plant defense. Probably has no oxalate oxidase activity even if the active site is conserved. The chain is Germin-like protein subfamily 3 member 1 (GLP1) from Arabidopsis thaliana (Mouse-ear cress).